The primary structure comprises 788 residues: Endonuclease MutS2 (788 aa).

G332–T339 contributes to the ATP binding site. One can recognise a Smr domain in the interval V713–K788.

It belongs to the DNA mismatch repair MutS family. MutS2 subfamily. Homodimer. Binds to stalled ribosomes, contacting rRNA.

Functionally, endonuclease that is involved in the suppression of homologous recombination and thus may have a key role in the control of bacterial genetic diversity. Acts as a ribosome collision sensor, splitting the ribosome into its 2 subunits. Detects stalled/collided 70S ribosomes which it binds and splits by an ATP-hydrolysis driven conformational change. Acts upstream of the ribosome quality control system (RQC), a ribosome-associated complex that mediates the extraction of incompletely synthesized nascent chains from stalled ribosomes and their subsequent degradation. Probably generates substrates for RQC. This is Endonuclease MutS2 from Clostridium botulinum (strain Kyoto / Type A2).